We begin with the raw amino-acid sequence, 182 residues long: Crossover junction endodeoxyribonuclease RuvC (182 aa).

Active-site residues include Asp7, Glu69, and Asp141. The Mg(2+) site is built by Asp7, Glu69, and Asp141.

The protein belongs to the RuvC family. In terms of assembly, homodimer which binds Holliday junction (HJ) DNA. The HJ becomes 2-fold symmetrical on binding to RuvC with unstacked arms; it has a different conformation from HJ DNA in complex with RuvA. In the full resolvosome a probable DNA-RuvA(4)-RuvB(12)-RuvC(2) complex forms which resolves the HJ. Mg(2+) is required as a cofactor.

It localises to the cytoplasm. It catalyses the reaction Endonucleolytic cleavage at a junction such as a reciprocal single-stranded crossover between two homologous DNA duplexes (Holliday junction).. Functionally, the RuvA-RuvB-RuvC complex processes Holliday junction (HJ) DNA during genetic recombination and DNA repair. Endonuclease that resolves HJ intermediates. Cleaves cruciform DNA by making single-stranded nicks across the HJ at symmetrical positions within the homologous arms, yielding a 5'-phosphate and a 3'-hydroxyl group; requires a central core of homology in the junction. The consensus cleavage sequence is 5'-(A/T)TT(C/G)-3'. Cleavage occurs on the 3'-side of the TT dinucleotide at the point of strand exchange. HJ branch migration catalyzed by RuvA-RuvB allows RuvC to scan DNA until it finds its consensus sequence, where it cleaves and resolves the cruciform DNA. The polypeptide is Crossover junction endodeoxyribonuclease RuvC (Polaromonas sp. (strain JS666 / ATCC BAA-500)).